The chain runs to 305 residues: Lipoyl synthase (305 aa).

The [4Fe-4S] cluster site is built by Cys41, Cys46, Cys52, Cys68, Cys72, Cys75, and Ser281. The Radical SAM core domain maps to 54–270; it reads GARRTATFMI…RKVAMDKGFK (217 aa). The segment covering 283 to 298 has biased composition (basic and acidic residues); that stretch reads HADEQVNEAAKEKQRQ. A disordered region spans residues 283-305; the sequence is HADEQVNEAAKEKQRQGEAQLNS.

This sequence belongs to the radical SAM superfamily. Lipoyl synthase family. Requires [4Fe-4S] cluster as cofactor.

The protein resides in the cytoplasm. The enzyme catalyses [[Fe-S] cluster scaffold protein carrying a second [4Fe-4S](2+) cluster] + N(6)-octanoyl-L-lysyl-[protein] + 2 oxidized [2Fe-2S]-[ferredoxin] + 2 S-adenosyl-L-methionine + 4 H(+) = [[Fe-S] cluster scaffold protein] + N(6)-[(R)-dihydrolipoyl]-L-lysyl-[protein] + 4 Fe(3+) + 2 hydrogen sulfide + 2 5'-deoxyadenosine + 2 L-methionine + 2 reduced [2Fe-2S]-[ferredoxin]. The protein operates within protein modification; protein lipoylation via endogenous pathway; protein N(6)-(lipoyl)lysine from octanoyl-[acyl-carrier-protein]. In terms of biological role, catalyzes the radical-mediated insertion of two sulfur atoms into the C-6 and C-8 positions of the octanoyl moiety bound to the lipoyl domains of lipoate-dependent enzymes, thereby converting the octanoylated domains into lipoylated derivatives. The polypeptide is Lipoyl synthase (Staphylococcus aureus (strain Mu3 / ATCC 700698)).